A 529-amino-acid chain; its full sequence is Inosine-5'-monophosphate dehydrogenase (529 aa).

CBS domains are found at residues 129-185 and 189-246; these read MVTD…SKQV and MTKT…PLAT. NAD(+) is bound by residues D283 and 334-336; that span reads GVG. K(+)-binding residues include G336 and G338. IMP is bound at residue S339. Residue C341 coordinates K(+). C341 serves as the catalytic Thioimidate intermediate. IMP-binding positions include 374–376, 397–398, and 421–425; these read DGG, GS, and YRGMG. R443 functions as the Proton acceptor in the catalytic mechanism. E458 serves as a coordination point for IMP. K(+) is bound by residues E511, S512, and H513.

The protein belongs to the IMPDH/GMPR family. Homotetramer. It depends on K(+) as a cofactor.

The catalysed reaction is IMP + NAD(+) + H2O = XMP + NADH + H(+). It functions in the pathway purine metabolism; XMP biosynthesis via de novo pathway; XMP from IMP: step 1/1. With respect to regulation, mycophenolic acid (MPA) is a non-competitive inhibitor that prevents formation of the closed enzyme conformation by binding to the same site as the amobile flap. In contrast, mizoribine monophosphate (MZP) is a competitive inhibitor that induces the closed conformation. MPA is a potent inhibitor of mammalian IMPDHs but a poor inhibitor of the bacterial enzymes. MZP is a more potent inhibitor of bacterial IMPDH. Functionally, catalyzes the conversion of inosine 5'-phosphate (IMP) to xanthosine 5'-phosphate (XMP), the first committed and rate-limiting step in the de novo synthesis of guanine nucleotides, and therefore plays an important role in the regulation of cell growth. This is Inosine-5'-monophosphate dehydrogenase from Mycobacterium leprae (strain TN).